The sequence spans 143 residues: 3-dehydroquinate dehydratase (143 aa).

The Proton acceptor role is filled by Y21. Residues N73, H79, and D86 each contribute to the substrate site. H99 serves as the catalytic Proton donor. Substrate contacts are provided by residues 100-101 (IS) and R110.

This sequence belongs to the type-II 3-dehydroquinase family. Homododecamer.

It carries out the reaction 3-dehydroquinate = 3-dehydroshikimate + H2O. It participates in metabolic intermediate biosynthesis; chorismate biosynthesis; chorismate from D-erythrose 4-phosphate and phosphoenolpyruvate: step 3/7. Catalyzes a trans-dehydration via an enolate intermediate. This chain is 3-dehydroquinate dehydratase, found in Deinococcus radiodurans (strain ATCC 13939 / DSM 20539 / JCM 16871 / CCUG 27074 / LMG 4051 / NBRC 15346 / NCIMB 9279 / VKM B-1422 / R1).